A 122-amino-acid chain; its full sequence is Small ribosomal subunit protein uS13 (122 aa).

A disordered region spans residues 94-122 (KKLPVRGQRTHTNARTRKGPAKPIAGKKK).

The protein belongs to the universal ribosomal protein uS13 family. In terms of assembly, part of the 30S ribosomal subunit. Forms a loose heterodimer with protein S19. Forms two bridges to the 50S subunit in the 70S ribosome.

Functionally, located at the top of the head of the 30S subunit, it contacts several helices of the 16S rRNA. In the 70S ribosome it contacts the 23S rRNA (bridge B1a) and protein L5 of the 50S subunit (bridge B1b), connecting the 2 subunits; these bridges are implicated in subunit movement. Contacts the tRNAs in the A and P-sites. The sequence is that of Small ribosomal subunit protein uS13 from Hyphomonas neptunium (strain ATCC 15444).